The sequence spans 266 residues: 3-methyl-2-oxobutanoate hydroxymethyltransferase (266 aa).

Residues Asp46 and Asp85 each coordinate Mg(2+). 3-methyl-2-oxobutanoate-binding positions include 46–47 (DS), Asp85, and Lys115. Position 117 (Glu117) interacts with Mg(2+). Glu183 serves as the catalytic Proton acceptor.

The protein belongs to the PanB family. In terms of assembly, homodecamer; pentamer of dimers. The cofactor is Mg(2+).

The protein resides in the cytoplasm. It carries out the reaction 3-methyl-2-oxobutanoate + (6R)-5,10-methylene-5,6,7,8-tetrahydrofolate + H2O = 2-dehydropantoate + (6S)-5,6,7,8-tetrahydrofolate. It functions in the pathway cofactor biosynthesis; (R)-pantothenate biosynthesis; (R)-pantoate from 3-methyl-2-oxobutanoate: step 1/2. Functionally, catalyzes the reversible reaction in which hydroxymethyl group from 5,10-methylenetetrahydrofolate is transferred onto alpha-ketoisovalerate to form ketopantoate. The protein is 3-methyl-2-oxobutanoate hydroxymethyltransferase of Trichlorobacter lovleyi (strain ATCC BAA-1151 / DSM 17278 / SZ) (Geobacter lovleyi).